Consider the following 540-residue polypeptide: Chaperonin GroEL (540 aa).

Residues 29-32 (TLGP), 86-90 (DGTTT), glycine 413, 476-478 (NAA), and aspartate 492 contribute to the ATP site.

The protein belongs to the chaperonin (HSP60) family. Forms a cylinder of 14 subunits composed of two heptameric rings stacked back-to-back. Interacts with the co-chaperonin GroES.

It is found in the cytoplasm. The catalysed reaction is ATP + H2O + a folded polypeptide = ADP + phosphate + an unfolded polypeptide.. In terms of biological role, together with its co-chaperonin GroES, plays an essential role in assisting protein folding. The GroEL-GroES system forms a nano-cage that allows encapsulation of the non-native substrate proteins and provides a physical environment optimized to promote and accelerate protein folding. In Geobacillus thermodenitrificans (strain NG80-2), this protein is Chaperonin GroEL.